The primary structure comprises 412 residues: Poly-beta-1,6-N-acetyl-D-glucosamine synthase (412 aa).

A run of 4 helical transmembrane segments spans residues 7–28, 298–320, 332–354, and 364–386; these read LLFY…YFFI, IASI…TANI, IFFF…ALFI, and VGLI…VVIM.

It belongs to the glycosyltransferase 2 family.

The protein resides in the cell membrane. Functionally, N-acetylglucosaminyltransferase that catalyzes the polymerization of single monomer units of UDP-N-acetylglucosamine to produce the linear homomer poly-beta-1,6-N-acetyl-D-glucosamine (PNAG, also referred to as PIA), a biofilm adhesin polysaccharide. Requires IcaD for full activity. This is Poly-beta-1,6-N-acetyl-D-glucosamine synthase (icaA) from Staphylococcus epidermidis (strain ATCC 35984 / DSM 28319 / BCRC 17069 / CCUG 31568 / BM 3577 / RP62A).